The following is a 2120-amino-acid chain: Alpha-tectorin (2120 aa).

The N-terminal stretch at 1–24 (MNTRSLLSAWAALLVVTVRHRAHA) is a signal peptide. 6 N-linked (GlcNAc...) asparagine glycosylation sites follow: Asn34, Asn215, Asn258, Asn277, Asn445, and Asn496. The region spanning 98–252 (PFCGDVANGI…GRWAFKIDGR (155 aa)) is the NIDO domain. Residues 260–312 (SLRGQFLHQGEIFWENSNCSTKCRCLDFNNEIFCQEMLAPFETVEPKIKFFQC) form the VWFC domain. One can recognise a VWFD 1 domain in the interval 317 to 490 (TACVVFGDPH…RVPHPERKCS (174 aa)). Cystine bridges form between Cys319-Cys451 and Cys341-Cys489. Positions 578–620 (PGHSHYSGCASGCPATCSDLTAPLRCTAPCPEGCECDDGHVLS) constitute a TIL 1 domain. Asn666, Asn792, Asn822, Asn834, Asn877, Asn899, Asn907, and Asn928 each carry an N-linked (GlcNAc...) asparagine glycan. Positions 690–865 (GLCSVGQNQV…SWTTFDEICN (176 aa)) constitute a VWFD 2 domain. A disulfide bond links Cys692 and Cys828. Residues 963 to 1013 (CPENSHFEECMSCVETCETLATGCCMDTCTEGCQCDEGFALRSPCVPRGEC) form the TIL 2 domain. 4 N-linked (GlcNAc...) asparagine glycosylation sites follow: Asn1025, Asn1041, Asn1207, and Asn1337. In terms of domain architecture, VWFD 3 spans 1066 to 1250 (ASCIVSGYGH…SWAKRDTFCR (185 aa)). 2 disulfide bridges follow: Cys1068/Cys1213 and Cys1090/Cys1249. A TIL 3 domain is found at 1345–1398 (CPPNSHYESCVSLCQPRCAAIRLKSDCGHYCVEGCQCDPGYVLNGKSCILPQNC). The VWFD 4 domain occupies 1458-1633 (SFCLAAGGGV…KTNGMQKSCN (176 aa)). Intrachain disulfides connect Cys1460–Cys1594, Cys1482–Cys1632, Cys1684–Cys1742, Cys1708–Cys1751, Cys1753–Cys1785, Cys1773–Cys1865, and Cys1804–Cys1824. Asn1511, Asn1537, Asn1723, Asn1739, Asn1761, Asn1818, Asn1831, Asn1847, Asn1887, and Asn1906 each carry an N-linked (GlcNAc...) asparagine glycan. Residues 1772-2026 (TCKAAQMEVS…YSCKINCPQH (255 aa)) form the ZP domain. 3 cysteine pairs are disulfide-bonded: Cys1947-Cys2007, Cys1968-Cys2023, and Cys2012-Cys2019. Asn2058 is lipidated: GPI-anchor amidated asparagine. A propeptide spans 2059-2120 (GGCEQICTSQ…LWAALHDPTS (62 aa)) (removed in mature form).

In terms of assembly, may form homomeric filament after self-association or heteromeric filament after association with beta-tectorin. At least 3 products of tectorin seem to exist: HMM, MMM and LMM. They may be generated by active processing or the result of proteolysis occurring between intrachain disulfide bonds. Post-translationally, the presence of a hydrophobic C-terminus preceded by a potential cleavage site strongly suggests that tectorins are synthesized as glycosylphosphatidylinositol-linked, membrane-bound precursors. Tectorins are targeted to the apical surface of the inner ear epithelia by the lipid and proteolytically released into the extracellular compartment. In terms of tissue distribution, expressed in the inner ear.

The protein localises to the cell membrane. The protein resides in the secreted. Its subcellular location is the extracellular space. It localises to the extracellular matrix. Its function is as follows. One of the major non-collagenous components of the tectorial membrane. The tectorial membrane is an extracellular matrix of the inner ear that covers the neuroepithelium of the cochlea and contacts the stereocilia bundles of specialized sensory hair cells. Sound induces movement of these hair cells relative to the tectorial membrane, deflects the stereocilia and leads to fluctuations in hair-cell membrane potential, transducing sound into electrical signals. The polypeptide is Alpha-tectorin (TECTA) (Gallus gallus (Chicken)).